The primary structure comprises 508 residues: Phenylalanine--tRNA ligase alpha subunit (508 aa).

The residue at position 2 (alanine 2) is an N-acetylalanine. A phosphoserine mark is found at serine 193 and serine 301. The residue at position 311 (lysine 311) is an N6-acetyllysine. L-phenylalanine is bound by residues threonine 329, 372–374 (QIE), and tyrosine 412. Glutamate 414 contacts Mg(2+). Phenylalanine 438 lines the L-phenylalanine pocket.

This sequence belongs to the class-II aminoacyl-tRNA synthetase family. Phe-tRNA synthetase alpha subunit type 2 subfamily. Heterotetramer; dimer of two heterodimers formed by FARSA and FARSB. Mg(2+) serves as cofactor.

Its subcellular location is the cytoplasm. The catalysed reaction is tRNA(Phe) + L-phenylalanine + ATP = L-phenylalanyl-tRNA(Phe) + AMP + diphosphate + H(+). This Mus musculus (Mouse) protein is Phenylalanine--tRNA ligase alpha subunit (Farsa).